A 604-amino-acid polypeptide reads, in one-letter code: NADP-dependent malic enzyme, mitochondrial (604 aa).

Positions 28–50 are disordered; sequence SAPAQGCHSKSGPPRPVPLKKRG. Tyr137 (proton donor) is an active-site residue. Arg190 is an NADP(+) binding site. Lys208 serves as the catalytic Proton acceptor. The a divalent metal cation site is built by Glu280, Asp281, and Asp304. Position 304 (Asp304) interacts with NADP(+). Ser371 is subject to Phosphoserine. Residue Asn443 coordinates NADP(+).

It belongs to the malic enzymes family. It depends on Mg(2+) as a cofactor. The cofactor is Mn(2+).

Its subcellular location is the mitochondrion matrix. It carries out the reaction (S)-malate + NADP(+) = pyruvate + CO2 + NADPH. It catalyses the reaction oxaloacetate + H(+) = pyruvate + CO2. The polypeptide is NADP-dependent malic enzyme, mitochondrial (Me3) (Mus musculus (Mouse)).